The following is a 156-amino-acid chain: Small ribosomal subunit protein uS7 (156 aa).

This sequence belongs to the universal ribosomal protein uS7 family. Part of the 30S ribosomal subunit. Contacts proteins S9 and S11.

Its function is as follows. One of the primary rRNA binding proteins, it binds directly to 16S rRNA where it nucleates assembly of the head domain of the 30S subunit. Is located at the subunit interface close to the decoding center, probably blocks exit of the E-site tRNA. The polypeptide is Small ribosomal subunit protein uS7 (Photorhabdus laumondii subsp. laumondii (strain DSM 15139 / CIP 105565 / TT01) (Photorhabdus luminescens subsp. laumondii)).